A 348-amino-acid chain; its full sequence is Dihydroorotase (348 aa).

The Zn(2+) site is built by His17 and His19. Substrate-binding positions include 19–21 and Asn45; that span reads HLR. Zn(2+) is bound by residues Lys103, His140, and His178. Lys103 is modified (N6-carboxylysine). A substrate-binding site is contributed by His140. A substrate-binding site is contributed by Leu223. Asp251 serves as a coordination point for Zn(2+). Residue Asp251 is part of the active site. Positions 255 and 267 each coordinate substrate.

Belongs to the metallo-dependent hydrolases superfamily. DHOase family. Class II DHOase subfamily. In terms of assembly, homodimer. Requires Zn(2+) as cofactor. The cofactor is Co(2+). Mg(2+) serves as cofactor. Ni(2+) is required as a cofactor.

It catalyses the reaction (S)-dihydroorotate + H2O = N-carbamoyl-L-aspartate + H(+). It functions in the pathway pyrimidine metabolism; UMP biosynthesis via de novo pathway; (S)-dihydroorotate from bicarbonate: step 3/3. Functionally, catalyzes the reversible cyclization of carbamoyl aspartate to dihydroorotate. This is Dihydroorotase from Klebsiella pneumoniae subsp. pneumoniae (strain ATCC 700721 / MGH 78578).